Reading from the N-terminus, the 234-residue chain is Zinc finger BED domain-containing protein 3 (234 aa).

Residues 19-42 (AAARGGQCPGLGPAPTPTPPGRLG) form a disordered region. The BED-type zinc-finger motif lies at 43–104 (APYSEAWGYF…SAHRRELESS (62 aa)). Zn(2+) is bound by residues Cys-69, Cys-72, His-92, and His-97. Disordered stretches follow at residues 94 to 126 (RSAH…AAPE) and 202 to 225 (REGA…GDRD). Over residues 111–122 (PAAPCPPPPGPA) the composition is skewed to pro residues. A compositionally biased stretch (basic and acidic residues) spans 216–225 (LKDDPEGDRD).

In terms of assembly, associates with the subcortical maternal complex (SCMC) composed of at least NLRP5, KHDC3L, OOEP, and TLE6 via interaction with NLRP5 and TLE6. Interacts with AXIN1; the interaction is direct, enhanced by protein kinase GSK3B and casein kinase CSNK1E activities and decreases GSK3B-induced beta-catenin serine and threonine phosphorylations. In terms of tissue distribution, secreted in blood plasma, and expressed in skeletal muscle and adipose tissue (at protein level).

It localises to the cytoplasm. The protein resides in the membrane. It is found in the secreted. Acts as a positive regulator in the activation of the canonical Wnt/beta-catenin signaling pathway by stabilizing cytoplasmic beta-catenin. Involved in transcription activation of Wnt target gene expression. Plays a role in symmetric division of blastomeres in the early stages of embryogenesis via regulation of mitotic spindle central positioning and organization of the F-actin filament network. Plays a role in regulating the distribution of cellular organelles, via modulation of cytoskeletal dynamics and cytoplasmic lattice formation. The protein is Zinc finger BED domain-containing protein 3 (ZBED3) of Homo sapiens (Human).